The following is a 248-amino-acid chain: Transmembrane protein 182 (248 aa).

The first 26 residues, 1-26, serve as a signal peptide directing secretion; the sequence is MKIHVAGFFAGLFGALATLFILLSFG. Over 27–136 the chain is Extracellular; that stretch reads TDYWLLASET…IIYRGFWSVS (110 aa). 2 N-linked (GlcNAc...) asparagine glycosylation sites follow: Asn66 and Asn119. A helical membrane pass occupies residues 137 to 157; that stretch reads MLVGVAAVVAGGFIIICAAPF. Over 158–167 the chain is Cytoplasmic; the sequence is ASHRLYKAGG. Residues 168–188 traverse the membrane as a helical segment; that stretch reads GLYLISGFFVLVVTAMYVIWI. The Extracellular portion of the chain corresponds to 189-218; that stretch reads DVLDVISLYTEYQKLNKCADFELNKTYGLS. Residue Asn212 is glycosylated (N-linked (GlcNAc...) asparagine). A helical transmembrane segment spans residues 219 to 239; that stretch reads FMFAPVGVFFCFLSGLLFLVI. Residues 240–248 lie on the Cytoplasmic side of the membrane; the sequence is GRTVHHQYN.

The protein belongs to the TMEM182 family.

The protein resides in the cell membrane. In terms of biological role, may negatively regulate myogenesis and skeletal muscle regeneration. This Danio rerio (Zebrafish) protein is Transmembrane protein 182 (tmem182a).